Consider the following 396-residue polypeptide: S-adenosylmethionine synthase (396 aa).

H16 serves as a coordination point for ATP. D18 lines the Mg(2+) pocket. A K(+)-binding site is contributed by E44. Residues E57 and Q100 each coordinate L-methionine. Residues 100–110 (QSVDINQGVDR) are flexible loop. ATP is bound by residues 165 to 167 (DAK), D240, 246 to 247 (RK), A263, and K267. Residue D240 participates in L-methionine binding. K271 provides a ligand contact to L-methionine.

Belongs to the AdoMet synthase family. In terms of assembly, homotetramer; dimer of dimers. The cofactor is Mg(2+). It depends on K(+) as a cofactor.

Its subcellular location is the cytoplasm. The enzyme catalyses L-methionine + ATP + H2O = S-adenosyl-L-methionine + phosphate + diphosphate. The protein operates within amino-acid biosynthesis; S-adenosyl-L-methionine biosynthesis; S-adenosyl-L-methionine from L-methionine: step 1/1. In terms of biological role, catalyzes the formation of S-adenosylmethionine (AdoMet) from methionine and ATP. The overall synthetic reaction is composed of two sequential steps, AdoMet formation and the subsequent tripolyphosphate hydrolysis which occurs prior to release of AdoMet from the enzyme. This is S-adenosylmethionine synthase from Pseudomonas aeruginosa (strain UCBPP-PA14).